A 1392-amino-acid polypeptide reads, in one-letter code: DNA-directed RNA polymerase subunit beta'' (1392 aa).

Zn(2+) contacts are provided by C224, C295, C302, and C305.

It belongs to the RNA polymerase beta' chain family. RpoC2 subfamily. As to quaternary structure, in plastids the minimal PEP RNA polymerase catalytic core is composed of four subunits: alpha, beta, beta', and beta''. When a (nuclear-encoded) sigma factor is associated with the core the holoenzyme is formed, which can initiate transcription. It depends on Zn(2+) as a cofactor.

Its subcellular location is the plastid. The protein localises to the chloroplast. The enzyme catalyses RNA(n) + a ribonucleoside 5'-triphosphate = RNA(n+1) + diphosphate. In terms of biological role, DNA-dependent RNA polymerase catalyzes the transcription of DNA into RNA using the four ribonucleoside triphosphates as substrates. In Eucalyptus globulus subsp. globulus (Tasmanian blue gum), this protein is DNA-directed RNA polymerase subunit beta''.